A 556-amino-acid chain; its full sequence is Arginine--tRNA ligase (556 aa).

The 'HIGH' region signature appears at 132-142; the sequence is ANPTGDLHLGH.

The protein belongs to the class-I aminoacyl-tRNA synthetase family. In terms of assembly, monomer.

Its subcellular location is the cytoplasm. It catalyses the reaction tRNA(Arg) + L-arginine + ATP = L-arginyl-tRNA(Arg) + AMP + diphosphate. In Listeria welshimeri serovar 6b (strain ATCC 35897 / DSM 20650 / CCUG 15529 / CIP 8149 / NCTC 11857 / SLCC 5334 / V8), this protein is Arginine--tRNA ligase.